The primary structure comprises 269 residues: MIRLQAIRRSRVEKSDGKNAYWCVVSGSDLWLVDGQIPYGSAEQWDLPQEKAILVDRYQNSPVYWLNAADIEQDRPLTSLRELLGVDEALFLAASKAVQYGHMSQTIRFCPQCGGRNYLNHQQLAMQCHDCRTLHYPRIFPCIIVAVRKQQQILLAQHPRHRNGMYTVIAGFVEVGETLEQCVAREVLEETGIVVTNIRYFGSQPWAFPSSMMMAFLADYDTGELKPDYSELSDANWFGIENLPPVAPRGTIARALIEQTLADIAQDQA.

Position 81 (arginine 81) interacts with substrate. Zn(2+) contacts are provided by cysteine 110, cysteine 113, cysteine 128, and cysteine 131. Tyrosine 136 serves as a coordination point for substrate. A Nudix hydrolase domain is found at 137–260 (PRIFPCIIVA…TIARALIEQT (124 aa)). A divalent metal cation contacts are provided by alanine 170, glutamate 186, and glutamate 190. The Nudix box motif lies at 171–192 (GFVEVGETLEQCVAREVLEETG). 204–211 (QPWAFPSS) is a binding site for substrate. Position 231 (glutamate 231) interacts with a divalent metal cation. Alanine 253 lines the substrate pocket.

It belongs to the Nudix hydrolase family. NudC subfamily. In terms of assembly, homodimer. Requires Mg(2+) as cofactor. It depends on Mn(2+) as a cofactor. The cofactor is Zn(2+).

It catalyses the reaction a 5'-end NAD(+)-phospho-ribonucleoside in mRNA + H2O = a 5'-end phospho-adenosine-phospho-ribonucleoside in mRNA + beta-nicotinamide D-ribonucleotide + 2 H(+). The catalysed reaction is NAD(+) + H2O = beta-nicotinamide D-ribonucleotide + AMP + 2 H(+). It carries out the reaction NADH + H2O = reduced beta-nicotinamide D-ribonucleotide + AMP + 2 H(+). In terms of biological role, mRNA decapping enzyme that specifically removes the nicotinamide adenine dinucleotide (NAD) cap from a subset of mRNAs by hydrolyzing the diphosphate linkage to produce nicotinamide mononucleotide (NMN) and 5' monophosphate mRNA. The NAD-cap is present at the 5'-end of some mRNAs and stabilizes RNA against 5'-processing. Has preference for mRNAs with a 5'-end purine. Catalyzes the hydrolysis of a broad range of dinucleotide pyrophosphates. This chain is NAD-capped RNA hydrolase NudC, found in Vibrio cholerae serotype O1 (strain ATCC 39315 / El Tor Inaba N16961).